The following is a 266-amino-acid chain: MHVNGKVALVTGAAQGIGRAFAEALLLKGAKVALVDWNLEAGVKCKAALDEQFEPQKTLFIQCDVADQEQLRDTFRKVVDHFGKLDILVNNAGVNNEKNWEKTLQINLVSVISGTYLGLDYMSKQNGGEGGININMSSLAGLMPVAQQPVYCASKHGIVGFTRSAAMAANLMNSGVRLNAICPGFVDTPILKSIEKEENMGKYIEYMGPIKDMMKYYGILDPSMIANGLITLIEDDALNGAIMKITTSKGIHFQDYDTTPFHMKMQ.

Residues 12–20, 36–37, 63–65, and asparagine 91 each bind NAD(+); these read GAAQGIGRA, DW, and CDV. Substrate is bound by residues serine 138 and glutamine 148. Tyrosine 151 acts as the Proton acceptor in catalysis. NAD(+) contacts are provided by residues 151 to 155 and 186 to 188; these read YCASK and VDT.

It belongs to the short-chain dehydrogenases/reductases (SDR) family. In terms of assembly, homodimer.

The protein localises to the cytoplasm. The enzyme catalyses prostaglandin E2 + NAD(+) = 15-oxoprostaglandin E2 + NADH + H(+). It catalyses the reaction (15S)-hydroxy-(5Z,8Z,11Z,13E)-eicosatetraenoate + NAD(+) = 15-oxo-(5Z,8Z,11Z,13E)-eicosatetraenoate + NADH + H(+). It carries out the reaction (11R)-hydroxy-(5Z,8Z,12E,14Z)-eicosatetraenoate + NAD(+) = 11-oxo-(5Z,8Z,12E,14Z)-eicosatetraenoate + NADH + H(+). The catalysed reaction is lipoxin A4 + NAD(+) = 15-oxo-(5S,6R)-dihydroxy-(7E,9E,11Z,13E)-eicosatetraenoate + NADH + H(+). The enzyme catalyses 15-oxo-(5S,6R)-dihydroxy-(7E,9E,11Z)-eicosatrienoate + NADH + H(+) = (5S,6R,15S)-trihydroxy-(7E,9E,11Z)-eicosatrienoate + NAD(+). It catalyses the reaction prostaglandin A1 + NAD(+) = 15-oxo-prostaglandin A1 + NADH + H(+). It carries out the reaction prostaglandin E1 + NAD(+) = 15-oxoprostaglandin E1 + NADH + H(+). The catalysed reaction is 14-hydroxy-(4Z,7Z,10Z,12E,16Z,19Z)-docosahexaenoate + NAD(+) = 14-oxo-(4Z,7Z,10Z,12E,16Z,19Z)-docosahexaenoate + NADH + H(+). The enzyme catalyses resolvin E1 + NAD(+) = 18-oxo-resolvin E1 + NADH + H(+). It catalyses the reaction resolvin D1 + NAD(+) = 8-oxoresolvin D1 + NADH + H(+). It carries out the reaction resolvin D1 + NAD(+) = 17-oxoresolvin D1 + NADH + H(+). The catalysed reaction is resolvin D2 + NAD(+) = 7-oxoresolvin D2 + NADH + H(+). The enzyme catalyses resolvin D2 + NAD(+) = 16-oxoresolvin D2 + NADH + H(+). Catalyzes the NAD-dependent dehydrogenation (oxidation) of a broad array of hydroxylated polyunsaturated fatty acids (mainly eicosanoids and docosanoids, including prostaglandins, lipoxins and resolvins), yielding their corresponding keto (oxo) metabolites. Decreases the levels of the pro-proliferative prostaglandins such as prostaglandin E2 (whose activity is increased in cancer because of an increase in the expression of cyclooxygenase 2) and generates oxo-fatty acid products that can profoundly influence cell function by abrogating pro-inflammatory cytokine expression. Converts resolvins E1, D1 and D2 to their oxo products, which represents a mode of resolvin inactivation. Resolvin E1 plays important roles during the resolution phase of acute inflammation, while resolvins D1 and D2 have a unique role in obesity-induced adipose inflammation. The protein is 15-hydroxyprostaglandin dehydrogenase [NAD(+)] (HPGD) of Bos taurus (Bovine).